The chain runs to 191 residues: Thymidylate kinase (191 aa).

7 to 14 is a binding site for ATP; the sequence is GVDGAGKS.

Belongs to the thymidylate kinase family.

The enzyme catalyses dTMP + ATP = dTDP + ADP. In terms of biological role, phosphorylation of dTMP to form dTDP in both de novo and salvage pathways of dTTP synthesis. The chain is Thymidylate kinase from Helicobacter pylori (strain P12).